Consider the following 371-residue polypeptide: MGRAPCCEKVGIKRGRWTAEEDQILSNYIQSNGEGSWRSLPKNAGLKRCGKSCRLRWINYLRSDLKRGNITPEEEELVVKLHSTLGNRWSLIAGHLPGRTDNEIKNYWNSHLSRKLHNFIRKPSISQDVSAVIMTNASSAPPPPQAKRRLGRTSRSAMKPKIHRTKTRKTKKTSAPPEPNADVAGADKEALMVESSGAEAELGRPCDYYGDDCNKNLMSINGDNGVLTFDDDIIDLLLDESDPGHLYTNTTCGGDGELHNIRDSEGARGFSDTWNQGNLDCLLQSCPSVESFLNYDHQVNDASTDEFIDWDCVWQEGSDNNLWHEKENPDSMVSWLLDGDDEATIGNSNCENFGEPLDHDDESALVAWLLS.

2 HTH myb-type domains span residues 9–61 (KVGI…INYL) and 62–116 (RSDL…SRKL). 2 DNA-binding regions (H-T-H motif) span residues 37 to 61 (WRSL…INYL) and 89 to 112 (WSLI…NSHL). Residues 136–183 (NASSAPPPPQAKRRLGRTSRSAMKPKIHRTKTRKTKKTSAPPEPNADV) form a disordered region. Positions 146–172 (AKRRLGRTSRSAMKPKIHRTKTRKTKK) are enriched in basic residues.

As to expression, expressed in stems and flower buds. Expressed in seedlings, roots, cotyledons and apical meristems.

The protein resides in the nucleus. Its function is as follows. Flavonol-specific transcription activator involved in the regulation of several genes of flavonoid biosynthesis. Activates the expression of CHS, CHI, F3H and FLS1. Controls flavonol biosynthesis mainly in the root. Confers tolerance to UV-B. The protein is Transcription factor MYB12 of Arabidopsis thaliana (Mouse-ear cress).